The following is a 107-amino-acid chain: MQLYTYLYLLVSLVTFYLILGTGTLGHGGALTERRSTDATALKPEPVLLQKSSARSTDDNGNDRLTQMKRILKKRGNKARGEEEVAKMAAELARENIAKGCKVNCYP.

The N-terminal stretch at 1–24 is a signal peptide; sequence MQLYTYLYLLVSLVTFYLILGTGT. Positions 25 to 80 are excised as a propeptide; it reads LGHGGALTERRSTDATALKPEPVLLQKSSARSTDDNGNDRLTQMKRILKKRGNKAR. The tract at residues 26–64 is disordered; sequence GHGGALTERRSTDATALKPEPVLLQKSSARSTDDNGNDR. Residues Glu-83, Glu-84, Glu-91, and Glu-95 each carry the 4-carboxyglutamate modification. A divalent metal cation is bound by residues Glu-91 and Glu-95. Cys-101 and Cys-105 form a disulfide bridge.

The protein belongs to the conotoxin B superfamily. The cofactor is Ca(2+). It depends on Mg(2+) as a cofactor. In terms of tissue distribution, expressed by the venom duct.

Its subcellular location is the secreted. In terms of biological role, conantokins inhibit N-methyl-D-aspartate (NMDA) receptors. This toxin is potent in the following order of preference: NR2B approximately NR2A/GRIN2A &gt; NR2C/GRIN2C &gt;&gt; NR2D/GRIN2D. Induces sleep-like symptoms in young mice. Is a highly potent anticonvulsant compound. This Conus radiatus (Rayed cone) protein is Conantokin-R.